The primary structure comprises 32 residues: Delta-conotoxin EVIA (32 aa).

3 disulfides stabilise this stretch: C3–C21, C10–C25, and C20–C29. 4-hydroxyproline is present on P6. L32 carries the post-translational modification Leucine amide.

The protein belongs to the conotoxin O1 superfamily. As to expression, expressed by the venom duct.

The protein localises to the secreted. In terms of biological role, delta-conotoxins bind to site 6 of voltage-gated sodium channels and inhibit the inactivation process. This toxin inhibits sodium channel inactivation in neuronal membranes from amphibians and mammals (Nav1.2a/SCN1A, Nav1.3/SCN3A and Nav1.6/SCN8A) upon binding to receptor site 6. This Conus ermineus (Agate cone) protein is Delta-conotoxin EVIA.